Consider the following 74-residue polypeptide: Homeobox protein Hox-B8 (74 aa).

Low complexity predominate over residues 1–24; sequence YTDCKLAASGLGEEAESSEQSPSP. Positions 1-28 are disordered; the sequence is YTDCKLAASGLGEEAESSEQSPSPTQLF. Positions 27–32 match the Antp-type hexapeptide motif; that stretch reads LFPWMR. A DNA-binding region (homeobox) is located at residues 39–74; the sequence is RRRGRQTYSRYQTLELEKEFLFNPYLTRKRRIEVSR.

Belongs to the Antp homeobox family.

It is found in the nucleus. In terms of biological role, sequence-specific transcription factor which is part of a developmental regulatory system that provides cells with specific positional identities on the anterior-posterior axis. This chain is Homeobox protein Hox-B8 (HOXB8), found in Gallus gallus (Chicken).